The chain runs to 239 residues: Fatty acid metabolism regulator protein (239 aa).

Residues 6 to 74 (QSPAGFAEEY…HGKPTKVNNF (69 aa)) form the HTH gntR-type domain. Positions 34–53 (ERELSELIGVTRTTLREVLQ) form a DNA-binding region, H-T-H motif.

As to quaternary structure, homodimer.

It is found in the cytoplasm. In terms of biological role, multifunctional regulator of fatty acid metabolism. This is Fatty acid metabolism regulator protein from Serratia proteamaculans (strain 568).